Here is a 747-residue protein sequence, read N- to C-terminus: MGRLNEQRLFQPDLCDVDLVLVPQRSVFPAHKGVLAAYSQFFHSLFTQNKQLQRVELSLEALAPGGLQQILNFIYTSKLLVNAANVHEVLSAASLLQMADIAASCQELLDARSLGPPGPGTVALAQPAASCTPAAPPYYCDIKQEADTPGLPKIYAREGPDPYSVRVEDGAGTAGGTVPATIGPAQPFFKEEKEGGVEEAGGPPASLCKLEGGEELEEELGGSGTYSRREQSQIIVEVNLNNQTLHVSTGPEGKPGAGPSPATVVLGREDGLQRHSDEEEEDDEEEEEEEEEEEGGGSGREEEEEEEGGSQGEEEEEEEDGHSEQEEEEEEEEEEGPSEQDQESSEEEEGEEGEAGGKQGPRGSRSSRADPPPHSHMATRSRENARRRGTPEPEEAGRRGGKRPKPPPGVASASARGPPATDGLGAKVKLEEKQHHPCQKCPRVFNNRWYLEKHMNVTHSRMQICDQCGKRFLLESELLLHRQTDCERNIQCVTCGKAFKKLWSLHEHNKIVHGYAEKKFSCEICEKKFYTMAHVRKHMVAHTKDMPFTCETCGKSFKRSMSLKVHSLQHSGEKPFRCENCNERFQYKYQLRSHMSIHIGHKQFMCQWCGKDFNMKQYFDEHMKTHTGEKPYICEICGKSFTSRPNMKRHRRTHTGEKPYPCDVCGQRFRFSNMLKAHKEKCFRVSHTLAGDGVPAAPGLPPTQPQAHALPLLPGLPQTLPPPPHLPPPPPLFPTTASPGGRMNANN.

Positions 15-83 (CDVDLVLVPQ…IYTSKLLVNA (69 aa)) constitute a BTB domain. K190 participates in a covalent cross-link: Glycyl lysine isopeptide (Lys-Gly) (interchain with G-Cter in SUMO2). Positions 243-424 (QTLHVSTGPE…ARGPPATDGL (182 aa)) are disordered. Over residues 267 to 277 (GREDGLQRHSD) the composition is skewed to basic and acidic residues. Residues 278–354 (EEEEDDEEEE…SEEEEGEEGE (77 aa)) are compositionally biased toward acidic residues. The span at 380–398 (RSRENARRRGTPEPEEAGR) shows a compositional bias: basic and acidic residues. The C2H2-type 1 zinc-finger motif lies at 436–459 (HPCQKCPRVFNNRWYLEKHMNVTH). The C2H2-type 2; degenerate zinc-finger motif lies at 463 to 485 (QICDQCGKRFLLESELLLHRQTD). 7 consecutive C2H2-type zinc fingers follow at residues 490–513 (IQCVTCGKAFKKLWSLHEHNKIVH), 520–542 (FSCEICEKKFYTMAHVRKHMVAH), 548–570 (FTCETCGKSFKRSMSLKVHSLQH), 576–598 (FRCENCNERFQYKYQLRSHMSIH), 604–626 (FMCQWCGKDFNMKQYFDEHMKTH), 632–654 (YICEICGKSFTSRPNMKRHRRTH), and 660–687 (YPCDVCGQRFRFSNMLKAHKEKCFRVSH). The segment at 694–747 (VPAAPGLPPTQPQAHALPLLPGLPQTLPPPPHLPPPPPLFPTTASPGGRMNANN) is disordered. The segment covering 719 to 733 (TLPPPPHLPPPPPLF) has biased composition (pro residues).

The protein belongs to the krueppel C2H2-type zinc-finger protein family.

Its subcellular location is the nucleus. Its function is as follows. May be involved in transcriptional regulation. The protein is Zinc finger and BTB domain-containing protein 47 (ZBTB47) of Homo sapiens (Human).